We begin with the raw amino-acid sequence, 321 residues long: Lipoyl synthase (321 aa).

7 residues coordinate [4Fe-4S] cluster: cysteine 68, cysteine 73, cysteine 79, cysteine 94, cysteine 98, cysteine 101, and serine 308. One can recognise a Radical SAM core domain in the interval 80–297 (FNHGTATFMI…KAEAMAMGFT (218 aa)).

The protein belongs to the radical SAM superfamily. Lipoyl synthase family. The cofactor is [4Fe-4S] cluster.

It is found in the cytoplasm. The catalysed reaction is [[Fe-S] cluster scaffold protein carrying a second [4Fe-4S](2+) cluster] + N(6)-octanoyl-L-lysyl-[protein] + 2 oxidized [2Fe-2S]-[ferredoxin] + 2 S-adenosyl-L-methionine + 4 H(+) = [[Fe-S] cluster scaffold protein] + N(6)-[(R)-dihydrolipoyl]-L-lysyl-[protein] + 4 Fe(3+) + 2 hydrogen sulfide + 2 5'-deoxyadenosine + 2 L-methionine + 2 reduced [2Fe-2S]-[ferredoxin]. Its pathway is protein modification; protein lipoylation via endogenous pathway; protein N(6)-(lipoyl)lysine from octanoyl-[acyl-carrier-protein]: step 2/2. In terms of biological role, catalyzes the radical-mediated insertion of two sulfur atoms into the C-6 and C-8 positions of the octanoyl moiety bound to the lipoyl domains of lipoate-dependent enzymes, thereby converting the octanoylated domains into lipoylated derivatives. This Yersinia pseudotuberculosis serotype O:1b (strain IP 31758) protein is Lipoyl synthase.